A 415-amino-acid chain; its full sequence is Serine hydroxymethyltransferase (415 aa).

Residues Leu-122 and 126 to 128 (GHL) contribute to the (6S)-5,6,7,8-tetrahydrofolate site. Lys-230 bears the N6-(pyridoxal phosphate)lysine mark.

This sequence belongs to the SHMT family. Homodimer. It depends on pyridoxal 5'-phosphate as a cofactor.

Its subcellular location is the cytoplasm. The catalysed reaction is (6R)-5,10-methylene-5,6,7,8-tetrahydrofolate + glycine + H2O = (6S)-5,6,7,8-tetrahydrofolate + L-serine. Its pathway is one-carbon metabolism; tetrahydrofolate interconversion. It participates in amino-acid biosynthesis; glycine biosynthesis; glycine from L-serine: step 1/1. In terms of biological role, catalyzes the reversible interconversion of serine and glycine with tetrahydrofolate (THF) serving as the one-carbon carrier. This reaction serves as the major source of one-carbon groups required for the biosynthesis of purines, thymidylate, methionine, and other important biomolecules. Also exhibits THF-independent aldolase activity toward beta-hydroxyamino acids, producing glycine and aldehydes, via a retro-aldol mechanism. The protein is Serine hydroxymethyltransferase of Ralstonia pickettii (strain 12J).